The following is a 123-amino-acid chain: Small ribosomal subunit protein uS13 (123 aa).

The tract at residues 99 to 123 is disordered; the sequence is RGQRTRTNARTRKGPRRTVGVKRKK.

The protein belongs to the universal ribosomal protein uS13 family. In terms of assembly, part of the 30S ribosomal subunit. Forms a loose heterodimer with protein S19. Forms two bridges to the 50S subunit in the 70S ribosome.

Functionally, located at the top of the head of the 30S subunit, it contacts several helices of the 16S rRNA. In the 70S ribosome it contacts the 23S rRNA (bridge B1a) and protein L5 of the 50S subunit (bridge B1b), connecting the 2 subunits; these bridges are implicated in subunit movement. Contacts the tRNAs in the A and P-sites. The polypeptide is Small ribosomal subunit protein uS13 (Carboxydothermus hydrogenoformans (strain ATCC BAA-161 / DSM 6008 / Z-2901)).